We begin with the raw amino-acid sequence, 611 residues long: Solute carrier family 23 member 3 (611 aa).

The Cytoplasmic segment spans residues 1–52; sequence MSRSPLHPIPLLSEGYQDTPAPLPPLLPPLQNPSSRSWASRVFGPSTWGLSC. Residues 53–73 traverse the membrane as a helical segment; the sequence is LLALQHFLVLASLLWASHLLL. The Extracellular portion of the chain corresponds to 74–88; that stretch reads LHGLPPGGLSYPPAQ. Residues 89-109 form a helical membrane-spanning segment; that stretch reads LLASSFFSCGLSTVLQTWMGS. The Cytoplasmic segment spans residues 110–168; sequence RLPLIQAPSLEFLIPALVLTNQKLPLTTKTPGNASLSLPLCSLTRSCHGLELWNTSLRE. Residues 169–189 form a helical membrane-spanning segment; that stretch reads VSGAVVVSGLLQGTIGLLGVP. The Extracellular segment spans residues 190-191; that stretch reads GR. The chain crosses the membrane as a helical span at residues 192 to 212; it reads VFPYCGPLVLAPSLVVAGLSA. The Cytoplasmic portion of the chain corresponds to 213 to 215; the sequence is HKE. A helical membrane pass occupies residues 216–236; sequence VAQFCSAHWGLALLLILLMVV. At 237-269 the chain is on the extracellular side; it reads CSQHLGSCQIPLCSWRPSSTSTHICIPVFRLLS. The helical transmembrane segment at 270-290 threads the bilayer; that stretch reads VLAPVACVWFISAFVGTSVIP. At 291-319 the chain is on the cytoplasmic side; sequence LQLSEPSDAPWFWLPHPGEWEWPLLTPRA. A helical transmembrane segment spans residues 320–340; it reads LAAGISMALAASTSSLGCYAL. The Extracellular segment spans residues 341–358; that stretch reads CGQLLRLSPPPPHACSRG. Residues 359–379 traverse the membrane as a helical segment; sequence LSLEGLGSVLAGLLGSPLGTA. The Cytoplasmic segment spans residues 380 to 397; the sequence is SSFPNVGTVSLFQTGSRR. Residues 398-417 form a helical membrane-spanning segment; sequence VAHLVGLFCMGLGLSPRLAQ. At 418-426 the chain is on the extracellular side; the sequence is LFTSIPLPV. Residues 427-449 form a helical membrane-spanning segment; that stretch reads LGGVLGVTQAVVLSAGFSSFHLA. At 450-455 the chain is on the cytoplasmic side; sequence DIDSGR. A helical membrane pass occupies residues 456–475; sequence NVFIVGFSIFMALLLPRWLR. At 476 to 489 the chain is on the extracellular side; it reads EAPVLLNTGWSPLD. Residues 490–510 traverse the membrane as a helical segment; sequence MFLRSLLAEPIFLAGLLGFLL. Over 511 to 611 the chain is Cytoplasmic; it reads ENTISGTRAE…TASREGVRSQ (101 aa). The disordered stretch occupies residues 574–611; it reads PEDSGDEGGSSKTGERADLLPNSGESYSTASREGVRSQ. Residues 596-605 show a composition bias toward polar residues; it reads SGESYSTASR.

Belongs to the nucleobase:cation symporter-2 (NCS2) (TC 2.A.40) family.

The protein resides in the membrane. It is found in the cytoplasm. It catalyses the reaction hypoxanthine(out) + Na(+)(out) = hypoxanthine(in) + Na(+)(in). Acts as a sodium-dependent hypoxanthine transporter. May show xanthine-hypoxanthine exchange activity. This chain is Solute carrier family 23 member 3 (Slc23a3), found in Mus musculus (Mouse).